Here is a 29-residue protein sequence, read N- to C-terminus: Cyclotide mela-2 (29 aa).

The cyclopeptide (Gly-Asp) cross-link spans 1–29 (GKPTCGETCFKGKCYTPGCTCSYPLCKKD). 3 disulfides stabilise this stretch: Cys5-Cys19, Cys9-Cys21, and Cys14-Cys26.

This is a cyclic peptide. In terms of processing, contains 3 disulfide bonds.

Functionally, probably participates in a plant defense mechanism (Potential). Binds to and induces leakage in phospholipd membranes, particularly ones containing 1-palmitoyl-2-oleophosphatidylethanolamine (POPE). In vitro, displays cytotoxicity against cultured cells but no hemolytic activity towards fresh erythrocytes. Not active against Gram-negative bacterium E.coli ATCC 25922 or Gram-positive bacterium S.aureus ATCC 25923 up to a concentration of 64 uM. The protein is Cyclotide mela-2 of Melicytus latifolius (Norfolk Island mahoe).